Reading from the N-terminus, the 434-residue chain is Tol-Pal system protein TolB (434 aa).

An N-terminal signal peptide occupies residues Met1–Ala28.

It belongs to the TolB family. In terms of assembly, the Tol-Pal system is composed of five core proteins: the inner membrane proteins TolA, TolQ and TolR, the periplasmic protein TolB and the outer membrane protein Pal. They form a network linking the inner and outer membranes and the peptidoglycan layer.

It is found in the periplasm. Its function is as follows. Part of the Tol-Pal system, which plays a role in outer membrane invagination during cell division and is important for maintaining outer membrane integrity. The polypeptide is Tol-Pal system protein TolB (Nitrosococcus oceani (strain ATCC 19707 / BCRC 17464 / JCM 30415 / NCIMB 11848 / C-107)).